Reading from the N-terminus, the 416-residue chain is 4-hydroxy-3-methylbut-2-en-1-yl diphosphate synthase (flavodoxin) (416 aa).

Cys-304, Cys-307, Cys-350, and Glu-357 together coordinate [4Fe-4S] cluster.

The protein belongs to the IspG family. Requires [4Fe-4S] cluster as cofactor.

The enzyme catalyses (2E)-4-hydroxy-3-methylbut-2-enyl diphosphate + oxidized [flavodoxin] + H2O + 2 H(+) = 2-C-methyl-D-erythritol 2,4-cyclic diphosphate + reduced [flavodoxin]. Its pathway is isoprenoid biosynthesis; isopentenyl diphosphate biosynthesis via DXP pathway; isopentenyl diphosphate from 1-deoxy-D-xylulose 5-phosphate: step 5/6. Converts 2C-methyl-D-erythritol 2,4-cyclodiphosphate (ME-2,4cPP) into 1-hydroxy-2-methyl-2-(E)-butenyl 4-diphosphate. The protein is 4-hydroxy-3-methylbut-2-en-1-yl diphosphate synthase (flavodoxin) of Rhizobium johnstonii (strain DSM 114642 / LMG 32736 / 3841) (Rhizobium leguminosarum bv. viciae).